A 198-amino-acid chain; its full sequence is MASTAIENAEPSDCKADLKIPKIDGDFPLKVLYCGVCSLPTEYCEYMPDVAKCRQWLEKNFPDVFAKLTLGHIPKQETGTVEGQATSGEEEEKKKQKRGGRGQIKQKKKTVPQRITIAKIPRAKKKYVTRVCGLATFEIELKDAQRFFAQKFSCGASVTGEDEIIIQGDFTDDIIDVIQEKWPEVDDDSIEDLGEVKK.

The interval 76–110 is disordered; that stretch reads QETGTVEGQATSGEEEEKKKQKRGGRGQIKQKKKT. The segment covering 77–87 has biased composition (polar residues); the sequence is ETGTVEGQATS. A compositionally biased stretch (basic residues) spans 95–110; that stretch reads KQKRGGRGQIKQKKKT. Residues 115-182 form the SUI1 domain; that stretch reads ITIAKIPRAK…DIIDVIQEKW (68 aa).

Belongs to the DENR family.

Functionally, may be involved in the translation of target mRNAs by scanning and recognition of the initiation codon. Involved in translation initiation; promotes recruitment of aminoacetyled initiator tRNA to P site of 40S ribosomes. Can promote release of deacylated tRNA and mRNA from recycled 40S subunits following ABCE1-mediated dissociation of post-termination ribosomal complexes into subunits. The chain is Density-regulated protein (denr) from Xenopus laevis (African clawed frog).